Consider the following 456-residue polypeptide: Glutathione reductase (456 aa).

FAD is bound by residues S14, G15, E34, T41, C42, and K50. Glutathione is bound at residue S14. A disulfide bridge connects residues C42 and C47. Glutathione is bound at residue Y99. Residue G115 coordinates FAD. The NADP(+) site is built by A180, I183, E186, R203, R209, and G267. Residue D308 coordinates FAD. E315 contributes to the NADP(+) binding site. FAD is bound at residue T317. A glutathione-binding site is contributed by R325. NADP(+) is bound at residue V348. Position 445 (H445) interacts with FAD. H445 acts as the Proton acceptor in catalysis.

It belongs to the class-I pyridine nucleotide-disulfide oxidoreductase family. In terms of assembly, homodimer. FAD is required as a cofactor.

It is found in the cytoplasm. It carries out the reaction 2 glutathione + NADP(+) = glutathione disulfide + NADPH + H(+). Its function is as follows. Catalyzes the reduction of glutathione disulfide (GSSG) to reduced glutathione (GSH). Constitutes the major mechanism to maintain a high GSH:GSSG ratio in the cytosol. This Haemophilus influenzae (strain ATCC 51907 / DSM 11121 / KW20 / Rd) protein is Glutathione reductase (gor).